Consider the following 81-residue polypeptide: Tissue- and phase-specific nuclear protein (81 aa).

Expressed in oviduct, where expression levels are higher in uterine sections than in tuba sections. No expression detected in small intestine and liver (at protein level).

It is found in the nucleus. This Podarcis siculus (Italian wall lizard) protein is Tissue- and phase-specific nuclear protein.